The primary structure comprises 566 residues: Phosphatidylinositol 3,4,5-trisphosphate 3-phosphatase TPTE2 (566 aa).

A run of 4 helical transmembrane segments spans residues 135–155 (SFAF…LLLA), 173–193 (ISLA…FVEG), 208–228 (AIIV…IKFL), and 234–254 (WIHL…HLIH). One can recognise a Phosphatase tensin-type domain in the interval 272–448 (RRYTRDGFDL…GYFAQVKHLY (177 aa)). Cys382 serves as the catalytic Phosphocysteine intermediate. A C2 tensin-type domain is found at 455–566 (RRILFIKRFI…ILHSFRLVFT (112 aa)).

The protein localises to the endoplasmic reticulum membrane. It is found in the golgi apparatus membrane. It catalyses the reaction a 1,2-diacyl-sn-glycero-3-phospho-(1D-myo-inositol-3,4,5-trisphosphate) + H2O = a 1,2-diacyl-sn-glycero-3-phospho-(1D-myo-inositol-4,5-bisphosphate) + phosphate. Functionally, acts as a lipid phosphatase, removing the phosphate in the D3 position of the inositol ring from phosphatidylinositol 3,4,5-trisphosphate. The polypeptide is Phosphatidylinositol 3,4,5-trisphosphate 3-phosphatase TPTE2 (TPTE2) (Macaca fascicularis (Crab-eating macaque)).